The following is a 144-amino-acid chain: Protein NrdI (144 aa).

The protein belongs to the NrdI family.

Functionally, probably involved in ribonucleotide reductase function. The polypeptide is Protein NrdI (Streptococcus pyogenes serotype M4 (strain MGAS10750)).